The chain runs to 242 residues: Eukaryotic translation initiation factor 4E type 1B (242 aa).

The tract at residues 1-42 is disordered; that stretch reads MLAVEVSEAEGGIREWEEEEKEEEAAERTPTGEKSPNSPRTL. Over residues 16 to 25 the composition is skewed to acidic residues; that stretch reads WEEEEKEEEA. Residues 32–41 are compositionally biased toward polar residues; that stretch reads GEKSPNSPRT. Residues 62–65 form an EIF4EBP1/2/3 binding region; the sequence is HPLQ. An mRNA-binding site is contributed by 81–82; sequence WQ. The interval 98–102 is EIF4EBP1/2/3 binding; sequence WALYS. 127-128 lines the mRNA pocket; sequence WE. The segment at 157 to 164 is EIF4EBP1/2/3 binding; the sequence is ETLLCLIG. MRNA-binding positions include 182-187 and 230-232; these read RTKGDK and TKS.

This sequence belongs to the eukaryotic initiation factor 4E family. In terms of assembly, eIF4F is a multi-subunit complex, the composition of which varies with external and internal environmental conditions. It is composed of at least EIF4A, EIF4E and EIF4G.

Its function is as follows. Recognizes and binds the 7-methylguanosine-containing mRNA cap during an early step in the initiation of protein synthesis and facilitates ribosome binding by inducing the unwinding of the mRNAs secondary structure. This Homo sapiens (Human) protein is Eukaryotic translation initiation factor 4E type 1B (EIF4E1B).